We begin with the raw amino-acid sequence, 329 residues long: GTP 3',8-cyclase (329 aa).

The region spanning 8-234 (AFARKFYYLR…QLRQRSDGPA (227 aa)) is the Radical SAM core domain. A GTP-binding site is contributed by Arg17. The [4Fe-4S] cluster site is built by Cys24 and Cys28. Tyr30 is an S-adenosyl-L-methionine binding site. Cys31 serves as a coordination point for [4Fe-4S] cluster. Arg68 contributes to the GTP binding site. Gly72 is an S-adenosyl-L-methionine binding site. Thr99 provides a ligand contact to GTP. Ser123 serves as a coordination point for S-adenosyl-L-methionine. Lys160 contributes to the GTP binding site. Met194 is a binding site for S-adenosyl-L-methionine. Residues Cys257 and Cys260 each contribute to the [4Fe-4S] cluster site. 262–264 (RLR) contacts GTP. Cys274 contributes to the [4Fe-4S] cluster binding site.

It belongs to the radical SAM superfamily. MoaA family. As to quaternary structure, monomer and homodimer. It depends on [4Fe-4S] cluster as a cofactor.

The enzyme catalyses GTP + AH2 + S-adenosyl-L-methionine = (8S)-3',8-cyclo-7,8-dihydroguanosine 5'-triphosphate + 5'-deoxyadenosine + L-methionine + A + H(+). It participates in cofactor biosynthesis; molybdopterin biosynthesis. Functionally, catalyzes the cyclization of GTP to (8S)-3',8-cyclo-7,8-dihydroguanosine 5'-triphosphate. The sequence is that of GTP 3',8-cyclase from Escherichia coli (strain K12 / MC4100 / BW2952).